A 598-amino-acid chain; its full sequence is Probable translation initiation factor IF-2 (598 aa).

A tr-type G domain is found at 3–223; that stretch reads LRCPIVSVLG…ISGLAQRFME (221 aa). Positions 12–19 are G1; it reads GHVDHGKT. GTP is bound at residue 12-19; the sequence is GHVDHGKT. Residues 37–41 form a G2 region; that stretch reads GITQH. Residues 76–79 form a G3 region; it reads DTPG. GTP-binding positions include 76-80 and 130-133; these read DTPGH and NKID. The G4 stretch occupies residues 130–133; the sequence is NKID. Residues 200–202 are G5; the sequence is SAM.

It belongs to the TRAFAC class translation factor GTPase superfamily. Classic translation factor GTPase family. IF-2 subfamily.

In terms of biological role, function in general translation initiation by promoting the binding of the formylmethionine-tRNA to ribosomes. Seems to function along with eIF-2. This is Probable translation initiation factor IF-2 from Methanococcus aeolicus (strain ATCC BAA-1280 / DSM 17508 / OCM 812 / Nankai-3).